The following is a 186-amino-acid chain: Adenine phosphoribosyltransferase (186 aa).

It belongs to the purine/pyrimidine phosphoribosyltransferase family. In terms of assembly, homodimer.

The protein resides in the cytoplasm. It carries out the reaction AMP + diphosphate = 5-phospho-alpha-D-ribose 1-diphosphate + adenine. It functions in the pathway purine metabolism; AMP biosynthesis via salvage pathway; AMP from adenine: step 1/1. Functionally, catalyzes a salvage reaction resulting in the formation of AMP, that is energically less costly than de novo synthesis. The polypeptide is Adenine phosphoribosyltransferase (Xanthomonas axonopodis pv. citri (strain 306)).